The sequence spans 204 residues: MNFLNFSILIFAYLLGSINSAIIVCYIFRLPSPRSVGSGNPGTTNVLRIGGKVLAAITLIFDILKGLVPVVIAKVLTGNDFITACTALYAILGHIFPIFFGFKGGKGVATLIGTLFGFSWILGLIFVITWLCVAIITRYSSLSALVATVIASFSVIFTSDLQVAAPFLIIAIIILVKHKGNIQRLISGQESKIGDKAKAKNDSN.

5 helical membrane passes run 8–28 (ILIFAYLLGSINSAIIVCYIF), 53–73 (VLAAITLIFDILKGLVPVVIA), 81–101 (FITACTALYAILGHIFPIFFG), 116–136 (FGFSWILGLIFVITWLCVAII), and 155–175 (VIFTSDLQVAAPFLIIAIIIL).

Belongs to the PlsY family. As to quaternary structure, probably interacts with PlsX.

It is found in the cell inner membrane. The enzyme catalyses an acyl phosphate + sn-glycerol 3-phosphate = a 1-acyl-sn-glycero-3-phosphate + phosphate. It participates in lipid metabolism; phospholipid metabolism. Functionally, catalyzes the transfer of an acyl group from acyl-phosphate (acyl-PO(4)) to glycerol-3-phosphate (G3P) to form lysophosphatidic acid (LPA). This enzyme utilizes acyl-phosphate as fatty acyl donor, but not acyl-CoA or acyl-ACP. This chain is Glycerol-3-phosphate acyltransferase, found in Francisella tularensis subsp. holarctica (strain OSU18).